We begin with the raw amino-acid sequence, 310 residues long: Methionyl-tRNA formyltransferase (310 aa).

110 to 113 contacts (6S)-5,6,7,8-tetrahydrofolate; the sequence is SLLP.

Belongs to the Fmt family.

The catalysed reaction is L-methionyl-tRNA(fMet) + (6R)-10-formyltetrahydrofolate = N-formyl-L-methionyl-tRNA(fMet) + (6S)-5,6,7,8-tetrahydrofolate + H(+). Attaches a formyl group to the free amino group of methionyl-tRNA(fMet). The formyl group appears to play a dual role in the initiator identity of N-formylmethionyl-tRNA by promoting its recognition by IF2 and preventing the misappropriation of this tRNA by the elongation apparatus. In Clostridium acetobutylicum (strain ATCC 824 / DSM 792 / JCM 1419 / IAM 19013 / LMG 5710 / NBRC 13948 / NRRL B-527 / VKM B-1787 / 2291 / W), this protein is Methionyl-tRNA formyltransferase.